The sequence spans 119 residues: Ribosome-binding factor A (119 aa).

The protein belongs to the RbfA family. In terms of assembly, monomer. Binds 30S ribosomal subunits, but not 50S ribosomal subunits or 70S ribosomes.

The protein resides in the cytoplasm. Its function is as follows. One of several proteins that assist in the late maturation steps of the functional core of the 30S ribosomal subunit. Associates with free 30S ribosomal subunits (but not with 30S subunits that are part of 70S ribosomes or polysomes). Required for efficient processing of 16S rRNA. May interact with the 5'-terminal helix region of 16S rRNA. In Lactococcus lactis subsp. cremoris (strain SK11), this protein is Ribosome-binding factor A.